The primary structure comprises 2130 residues: Dedicator of cytokinesis protein 7 (2130 aa).

Position 30 is a phosphoserine (S30). The disordered stretch occupies residues 137 to 175 (GFNPNTLDKQKERQKGLPRQVFESDEAPDGSSYQDEQDD). 2 positions are modified to phosphoserine: S180 and S182. The stretch at 365–395 (FKEADATKNKEKLEKLKSQADQFCQRLGKYR) forms a coiled coil. K381 is subject to N6-methyllysine. T450 is modified (phosphothreonine). At S452 the chain carries Phosphoserine. Positions 561–727 (RNLLYIYPQS…GVFNVEVVAV (167 aa)) constitute a C2 DOCK-type domain. S862, S864, S882, S888, S896, S900, and S905 each carry phosphoserine. A compositionally biased stretch (low complexity) spans 888–901 (SLNLNRSRSLSNSN). The interval 888–966 (SLNLNRSRSL…SCNRMSSHTE (79 aa)) is disordered. Phosphothreonine occurs at positions 907 and 909. 8 positions are modified to phosphoserine: S910, S929, S963, S1382, S1420, S1422, S1424, and S1428. Over residues 942 to 966 (SNPSPSAESTQAMDRSCNRMSSHTE) the composition is skewed to polar residues. The 437-residue stretch at 1668–2104 (KGYQTSPDLR…LQPLINRKIP (437 aa)) folds into the DOCKER domain. K1952 bears the N6-acetyllysine mark. The stretch at 2076-2102 (DQKEYQRELERNYHRLKEALQPLINRK) forms a coiled coil. S2119 is modified (phosphoserine).

The protein belongs to the DOCK family. In terms of assembly, component of the DOCK7-induced septin displacement/DISP complex, at least composed of DOCK7, LRCH3 and MYO6. Interacts with TSC1. Interacts with nucleotide-free RAC1 and RAC3. Interacts with TACC3. Interacts with CRY1. Interacts with NOD2.

The protein resides in the cell projection. It localises to the axon. Its function is as follows. Functions as a guanine nucleotide exchange factor (GEF), which activates Rac1 and Rac3 Rho small GTPases by exchanging bound GDP for free GTP. Does not have a GEF activity for CDC42. Required for STMN1 'Ser-15' phosphorylation during axon formation and consequently for neuronal polarization. As part of the DISP complex, may regulate the association of septins with actin and thereby regulate the actin cytoskeleton. Has a role in pigmentation. Involved in the regulation of cortical neurogenesis through the control of radial glial cells (RGCs) proliferation versus differentiation; negatively regulates the basal-to-apical interkinetic nuclear migration of RGCs by antagonizing the microtubule growth-promoting function of TACC3. The polypeptide is Dedicator of cytokinesis protein 7 (Dock7) (Mus musculus (Mouse)).